The sequence spans 145 residues: Large ribosomal subunit protein uL11 (145 aa).

This sequence belongs to the universal ribosomal protein uL11 family. In terms of assembly, part of the ribosomal stalk of the 50S ribosomal subunit. Interacts with L10 and the large rRNA to form the base of the stalk. L10 forms an elongated spine to which L12 dimers bind in a sequential fashion forming a multimeric L10(L12)X complex. One or more lysine residues are methylated.

Forms part of the ribosomal stalk which helps the ribosome interact with GTP-bound translation factors. The protein is Large ribosomal subunit protein uL11 of Rickettsia felis (strain ATCC VR-1525 / URRWXCal2) (Rickettsia azadi).